Consider the following 226-residue polypeptide: uncharacterized protein (226 aa).

It belongs to the SSM1 family.

This is an uncharacterized protein from Schizosaccharomyces pombe (strain 972 / ATCC 24843) (Fission yeast).